A 147-amino-acid polypeptide reads, in one-letter code: D(1B) dopamine receptor (147 aa).

A helical membrane pass occupies residues 1–12 (SILISFPVQLNW). Residues 13-55 (HRDQAGSWGGLDLTNNLANWTPWEEDVWEPDVRAENCDSSLNR) are Extracellular-facing. The N-linked (GlcNAc...) asparagine glycan is linked to Asn54. Residues 56-78 (TYAISSSLVSFYIPVAIMIVTYT) form a helical membrane-spanning segment. The Cytoplasmic portion of the chain corresponds to 79-128 (RIYRIAQVQIRRISSLERAAEHAQSCRSSAACAPDTSLRASIKKETKVLK). The helical transmembrane segment at 129-147 (TLSVIMGVFVCCWLPFFIL) threads the bilayer.

Belongs to the G-protein coupled receptor 1 family.

The protein localises to the cell membrane. In terms of biological role, dopamine receptor whose activity is mediated by G proteins which activate adenylyl cyclase. This chain is D(1B) dopamine receptor (DRD5), found in Macaca mulatta (Rhesus macaque).